Here is an 80-residue protein sequence, read N- to C-terminus: Lantibiotic Flvalpha.a (80 aa).

The propeptide at 1-38 is cleaved by FlvT; that stretch reads MNKNPIYRSEEEAKDIACGNVAAELDENSQALDAINGA. 2,3-didehydrobutyrine; by FlvM1 is present on residues threonine 43 and threonine 47. The beta-methyllanthionine (Thr-Cys); by FlvM1 cross-link spans 52–55; sequence TVGC. The segment at residues 58–68 is a cross-link (lanthionine (Ser-Cys); by FlvM1); sequence SYGLGNGGYCC. Cross-links (beta-methyllanthionine (Thr-Cys); by FlvM1) lie at residues 69–74 and 71–78; these read TYTVEC and TVECSKTC.

Post-translationally, the lanthionine formed by Ser-58 and Cys-68 forms a putative lipid II binding motif. Maturation of FlvA1 peptides involves the enzymatic conversion of Thr, and Ser into dehydrated AA and the formation of thioether bonds with cysteines. Modifications are processed by the flavecin synthetase FlvM1. This is followed by membrane translocation and cleavage of the modified precursor. In terms of processing, contains DL-lanthionine and DL-beta-methyllanthionine, when coepressed in E.coli with the flavecin synthetase FlvM1.

Its subcellular location is the secreted. Functionally, lanthionine-containing peptide antibiotic (lantibiotic) only active on Gram-positive bacteria in synergy with Flvbeta peptides, which are encoded by the same operon than Flvalpha.a. Shows antibacterial activity in synergy with Flvbeta.b, Flvbeta.c, Flvbeta.e and Flvbeta.g. Does not show antibacterial activity when tested with Flvbeta.a, Flvbeta.d, Flvbeta.f and Flvbeta.h. The bactericidal activity of lantibiotics is based on depolarization of energized bacterial cytoplasmic membranes, initiated by the formation of aqueous transmembrane pores. This chain is Lantibiotic Flvalpha.a, found in Ruminococcus flavefaciens.